A 421-amino-acid polypeptide reads, in one-letter code: Inhibitor of growth protein 3 (421 aa).

Positions 129–164 (PSQPVNNHHAHSHTPVEKRKYNPTSHHTATDHIPEK) are disordered. Residues K148, K165, and K167 each participate in a glycyl lysine isopeptide (Lys-Gly) (interchain with G-Cter in SUMO2) cross-link. N6-acetyllysine is present on K181. K256 is covalently cross-linked (Glycyl lysine isopeptide (Lys-Gly) (interchain with G-Cter in SUMO2)). At K264 the chain carries N6-acetyllysine. A disordered region spans residues 286 to 324 (TQNASSSAADSRSGRKSKNNTKSSSQQSSSSSSSSSSSS). Residues 308-324 (SSSQQSSSSSSSSSSSS) show a composition bias toward low complexity. Residues 363–412 (PRYCICNQVSYGEMVGCDNQDCPIEWFHYGCVGLTEAPKGKWFCPQCTAA) form a PHD-type zinc finger. The Zn(2+) site is built by C366, C368, C379, C384, H390, C393, C406, and C409.

This sequence belongs to the ING family. In terms of assembly, interacts with H3K4me3 and to a lesser extent with H3K4me2. Component of the NuA4 histone acetyltransferase complex which contains the catalytic subunit KAT5/TIP60 and the subunits EP400, TRRAP/PAF400, BRD8/SMAP, EPC1, DMAP1/DNMAP1, RUVBL1/TIP49, RUVBL2, ING3, actin, ACTL6A/BAF53A, MORF4L1/MRG15, MORF4L2/MRGX, MRGBP, YEATS4/GAS41, VPS72/YL1 and MEAF6. The NuA4 complex interacts with MYC. HTATTIP/TIP60, EPC1, and ING3 together constitute a minimal HAT complex termed Piccolo NuA4. Component of a SWR1-like complex.

It localises to the nucleus. Its function is as follows. Component of the NuA4 histone acetyltransferase (HAT) complex which is involved in transcriptional activation of select genes principally by acetylation of nucleosomal histones H4 and H2A. This modification may both alter nucleosome - DNA interactions and promote interaction of the modified histones with other proteins which positively regulate transcription. This complex may be required for the activation of transcriptional programs associated with oncogene and proto-oncogene mediated growth induction, tumor suppressor mediated growth arrest and replicative senescence, apoptosis, and DNA repair. NuA4 may also play a direct role in DNA repair when directly recruited to sites of DNA damage. Component of a SWR1-like complex that specifically mediates the removal of histone H2A.Z/H2AZ1 from the nucleosome. The protein is Inhibitor of growth protein 3 (Ing3) of Rattus norvegicus (Rat).